The following is a 126-amino-acid chain: Holo-[acyl-carrier-protein] synthase (126 aa).

Mg(2+) is bound by residues Asp-9 and Glu-58.

The protein belongs to the P-Pant transferase superfamily. AcpS family. The cofactor is Mg(2+).

It localises to the cytoplasm. The enzyme catalyses apo-[ACP] + CoA = holo-[ACP] + adenosine 3',5'-bisphosphate + H(+). Its function is as follows. Transfers the 4'-phosphopantetheine moiety from coenzyme A to a Ser of acyl-carrier-protein. The protein is Holo-[acyl-carrier-protein] synthase of Escherichia coli O127:H6 (strain E2348/69 / EPEC).